A 281-amino-acid chain; its full sequence is Large ribosomal subunit protein mL46 (281 aa).

The N-terminal 19 residues, 1-19 (MKVNLMLKRGLATATATAS), are a transit peptide targeting the mitochondrion. The segment covering 106–118 (RERSTKQEVKLSD) has biased composition (basic and acidic residues). The segment at 106–141 (RERSTKQEVKLSDDSTVAFSNNQKEQSKDDVNRPVI) is disordered. Polar residues predominate over residues 119–129 (DSTVAFSNNQK).

The protein belongs to the mitochondrion-specific ribosomal protein mL46 family. Component of the mitochondrial large ribosomal subunit (mt-LSU). Mature yeast 74S mitochondrial ribosomes consist of a small (37S) and a large (54S) subunit. The 37S small subunit contains a 15S ribosomal RNA (15S mt-rRNA) and 34 different proteins. The 54S large subunit contains a 21S rRNA (21S mt-rRNA) and 46 different proteins.

It is found in the mitochondrion. Component of the mitochondrial ribosome (mitoribosome), a dedicated translation machinery responsible for the synthesis of mitochondrial genome-encoded proteins, including at least some of the essential transmembrane subunits of the mitochondrial respiratory chain. The mitoribosomes are attached to the mitochondrial inner membrane and translation products are cotranslationally integrated into the membrane. The protein is Large ribosomal subunit protein mL46 (MRPL17) of Saccharomyces cerevisiae (strain ATCC 204508 / S288c) (Baker's yeast).